Reading from the N-terminus, the 717-residue chain is Polyribonucleotide nucleotidyltransferase (717 aa).

Residues Asp-496 and Asp-502 each coordinate Mg(2+). Positions 563–622 constitute a KH domain; the sequence is PRLLTIKIDPDLIGLVIGPGGKTVKGITEQTGTKIDIDDDGTVTISSTDGEQAEKAKRLI. Residues 632 to 700 form the S1 motif domain; it reads GEVYLGRVTR…SKGRLNLTRL (69 aa).

This sequence belongs to the polyribonucleotide nucleotidyltransferase family. Mg(2+) is required as a cofactor.

The protein resides in the cytoplasm. The catalysed reaction is RNA(n+1) + phosphate = RNA(n) + a ribonucleoside 5'-diphosphate. In terms of biological role, involved in mRNA degradation. Catalyzes the phosphorolysis of single-stranded polyribonucleotides processively in the 3'- to 5'-direction. The sequence is that of Polyribonucleotide nucleotidyltransferase from Microcystis aeruginosa (strain NIES-843 / IAM M-2473).